The sequence spans 420 residues: Meiotically up-regulated gene 137 protein (420 aa).

The region spanning 10-232 (NEKPLGDQRA…QNSLTPQKKI (223 aa)) is the BAR domain. The SH3 domain occupies 279–345 (KETVFVKAIY…PVNYCTRIYD (67 aa)). The segment at 398–420 (SQNVEASSQPIKIRKPLPEIPNK) is disordered.

It is found in the cytoplasm. The protein localises to the nucleus. Functionally, has a role in meiosis and sporulation. This chain is Meiotically up-regulated gene 137 protein (mug137), found in Schizosaccharomyces pombe (strain 972 / ATCC 24843) (Fission yeast).